A 755-amino-acid polypeptide reads, in one-letter code: Diamine oxidase [copper-containing] (755 aa).

A signal peptide spans 1-24; sequence MGRGTLALGWAGAALLLLQMLAAA. N-linked (GlcNAc...) asparagine glycosylation is present at Asn-115. A disulfide bridge connects residues Cys-182 and Cys-186. Asp-376 (proton acceptor) is an active-site residue. Cys-394 and Cys-420 form a disulfide bridge. Tyr-464 serves as the catalytic Schiff-base intermediate with substrate; via topaquinone. Tyr-464 carries the post-translational modification 2',4',5'-topaquinone. Cu(2+) is bound by residues His-513 and His-515. Asp-522, Leu-523, and Asp-524 together coordinate Ca(2+). N-linked (GlcNAc...) asparagine glycosylation is present at Asn-541. The Ca(2+) site is built by Glu-565, Phe-656, Asn-659, Glu-661, Asp-667, and Leu-668. His-678 contacts Cu(2+). Asn-749 carries an N-linked (GlcNAc...) asparagine glycan.

This sequence belongs to the copper/topaquinone oxidase family. In terms of assembly, homodimer; disulfide-linked. Cu(2+) is required as a cofactor. The cofactor is Ca(2+). L-topaquinone serves as cofactor. Topaquinone (TPQ) is generated by copper-dependent autoxidation of a specific tyrosyl residue. Post-translationally, N-glycosylated; the glycans are primarily linear, di-, or tribranched fucosylated complex type.

It is found in the secreted. The protein localises to the extracellular space. It localises to the cell membrane. It carries out the reaction histamine + O2 + H2O = imidazole-4-acetaldehyde + H2O2 + NH4(+). The catalysed reaction is N(tau)-methylhistamine + O2 + H2O = 1-methylimidazole-4-acetaldehyde + H2O2 + NH4(+). It catalyses the reaction putrescine + O2 + H2O = 4-aminobutanal + H2O2 + NH4(+). The enzyme catalyses cadaverine + O2 + H2O = 5-aminopentanal + H2O2 + NH4(+). Inhibited by amiloride and amiloride analogs. Its function is as follows. Catalyzes the oxidative deamination of primary amines to the corresponding aldehydes with the concomitant production of hydrogen peroxide and ammonia. Its preferred substrates in vitro are the diamines histamine and 1-methylhistamine and it could therefore play a role in allergic and immune responses. Has a broad specificity for diamines and can also act on cadaverine and putrescine, two products of amino acid catabolism. It could also act on polyamines, like spermidine and spermine though less efficiently, and regulate various biological processes. The protein is Diamine oxidase [copper-containing] of Sus scrofa (Pig).